A 623-amino-acid chain; its full sequence is DNA-directed RNA polymerase subunit gamma (623 aa).

4 residues coordinate Zn(2+): C70, C72, C85, and C88. Mg(2+) is bound by residues D466, D468, and D470.

The protein belongs to the RNA polymerase beta' chain family. RpoC1 subfamily. As to quaternary structure, in cyanobacteria the RNAP catalytic core is composed of 2 alpha, 1 beta, 1 beta', 1 gamma and 1 omega subunit. When a sigma factor is associated with the core the holoenzyme is formed, which can initiate transcription. Mg(2+) is required as a cofactor. Requires Zn(2+) as cofactor.

It carries out the reaction RNA(n) + a ribonucleoside 5'-triphosphate = RNA(n+1) + diphosphate. Its function is as follows. DNA-dependent RNA polymerase catalyzes the transcription of DNA into RNA using the four ribonucleoside triphosphates as substrates. The polypeptide is DNA-directed RNA polymerase subunit gamma (Acaryochloris marina (strain MBIC 11017)).